Here is a 413-residue protein sequence, read N- to C-terminus: DNA primase large subunit PriL (413 aa).

[4Fe-4S] cluster contacts are provided by Cys-230, Cys-301, Cys-310, and Cys-317. Basic and acidic residues-rich tracts occupy residues 340–356, 362–381, and 388–413; these read MEKEKEEKEEKEKQEEK, KEKQEEIKKKKKKEKQEEKG, and KKRERKQEKETKRREGKEKQEEKKRI. Residues 340–413 form a disordered region; sequence MEKEKEEKEE…KEKQEEKKRI (74 aa).

The protein belongs to the eukaryotic-type primase large subunit family. Heterodimer of a small subunit (PriS) and a large subunit (PriL). The cofactor is [4Fe-4S] cluster.

Its function is as follows. Regulatory subunit of DNA primase, an RNA polymerase that catalyzes the synthesis of short RNA molecules used as primers for DNA polymerase during DNA replication. Stabilizes and modulates the activity of the small subunit, increasing the rate of DNA synthesis, and conferring RNA synthesis capability. The DNA polymerase activity may enable DNA primase to also catalyze primer extension after primer synthesis. May also play a role in DNA repair. This chain is DNA primase large subunit PriL, found in Methanosarcina barkeri (strain Fusaro / DSM 804).